A 215-amino-acid polypeptide reads, in one-letter code: FMN-dependent NADH:quinone oxidoreductase (215 aa).

FMN is bound at residue 17-19; sequence SAS.

It belongs to the azoreductase type 1 family. As to quaternary structure, homodimer. FMN is required as a cofactor.

The enzyme catalyses 2 a quinone + NADH + H(+) = 2 a 1,4-benzosemiquinone + NAD(+). It catalyses the reaction N,N-dimethyl-1,4-phenylenediamine + anthranilate + 2 NAD(+) = 2-(4-dimethylaminophenyl)diazenylbenzoate + 2 NADH + 2 H(+). Its function is as follows. Quinone reductase that provides resistance to thiol-specific stress caused by electrophilic quinones. Functionally, also exhibits azoreductase activity. Catalyzes the reductive cleavage of the azo bond in aromatic azo compounds to the corresponding amines. This chain is FMN-dependent NADH:quinone oxidoreductase, found in Clostridium botulinum (strain Eklund 17B / Type B).